A 265-amino-acid chain; its full sequence is Capsule polysaccharide export inner-membrane protein CtrC (265 aa).

A run of 6 helical transmembrane segments spans residues 37–57 (IGFLWLFVEPLLMTFVIVLMW), 67–84 (TLNIVAFAITGYPMLMMW), 121–141 (IAGATIAQIVIMAVLIAIGWI), 148–168 (FYMLMAWLLMAFFAIGLGLVI), 178–198 (FGKIWGTLTFVMMPLSGAFFF), and 238–258 (WYIVLCNLVLLLFGLAMVSKF). The 222-residue stretch at 37-258 (IGFLWLFVEP…LFGLAMVSKF (222 aa)) folds into the ABC transmembrane type-2 domain.

This sequence belongs to the ABC-2 integral membrane protein family.

The protein resides in the cell inner membrane. In terms of biological role, may form an ATP-driven capsule polysaccharide export apparatus, in association with the CtrB and CtrD proteins. The protein is Capsule polysaccharide export inner-membrane protein CtrC (ctrC) of Neisseria meningitidis serogroup B (strain ATCC BAA-335 / MC58).